The sequence spans 177 residues: Chorismate pyruvate-lyase (177 aa).

Substrate-binding residues include methionine 36, arginine 78, leucine 116, and glutamate 157.

The protein belongs to the UbiC family. Monomer.

It is found in the cytoplasm. It carries out the reaction chorismate = 4-hydroxybenzoate + pyruvate. Its pathway is cofactor biosynthesis; ubiquinone biosynthesis. Its function is as follows. Removes the pyruvyl group from chorismate, with concomitant aromatization of the ring, to provide 4-hydroxybenzoate (4HB) for the ubiquinone pathway. The sequence is that of Chorismate pyruvate-lyase from Pectobacterium atrosepticum (strain SCRI 1043 / ATCC BAA-672) (Erwinia carotovora subsp. atroseptica).